Here is a 520-residue protein sequence, read N- to C-terminus: Amphoterin-induced protein 2 (520 aa).

The N-terminal stretch at 1–37 is a signal peptide; sequence MSLRFHTLPTLPRAVKPGCRELLCLLVIAVMVSPSSS. An LRRNT domain is found at 38-67; sequence GLCPTACICATDIVSCTNKNLSKVPGNLFR. Topologically, residues 38 to 398 are extracellular; the sequence is GLCPTACICA…SHHAHEAFNT (361 aa). Disulfide bonds link Cys-40-Cys-46 and Cys-44-Cys-53. Asn-57 carries N-linked (GlcNAc...) asparagine glycosylation. 6 LRR repeats span residues 68–89, 93–114, 117–138, 141–162, 165–186, and 192–213; these read LIKR…WIPV, KLST…SFST, NLKC…MFQE, VLEV…AFGG, HLQK…LYVG, and DLTF…HINL. Asn-103 is a glycosylation site (N-linked (GlcNAc...) asparagine). Residues 227–283 enclose the LRRCT domain; it reads NPFVCDCSLYSLLTFWYRRHFNSVTDFKHDYTCRLWLDSRHSHQLLLLQDSFLNCSH. 2 disulfide bridges follow: Cys-231/Cys-259 and Cys-233/Cys-281. Asn-280, Asn-287, Asn-344, Asn-372, Asn-380, Asn-383, and Asn-387 each carry an N-linked (GlcNAc...) asparagine glycan. In terms of domain architecture, Ig-like C2-type spans 288–378; sequence GSFHALGFIH…RLLNETVDIM (91 aa). Residues Cys-309 and Cys-362 are joined by a disulfide bond. Residues 399–419 form a helical membrane-spanning segment; it reads AFTTLAACVVSIVLVLLYLYL. The Cytoplasmic portion of the chain corresponds to 420–520; it reads TPCPCKCRDK…FSDTPFVAST (101 aa). Disordered stretches follow at residues 437–458 and 498–520; these read QSNA…AEDR and SRAK…VAST.

This sequence belongs to the immunoglobulin superfamily. AMIGO family. As to quaternary structure, binds itself as well as AMIGO1 and AMIGO3. Highest levels in the lung. High levels in cerebellar granule neurons and Purkinje cells. Also in pyramidal cells between CA1 and CA3 regions of the hippocampus and granule cells of the dentate gyrus.

Its subcellular location is the cell membrane. The protein localises to the nucleus. Functionally, required for depolarization-dependent survival of cultured cerebellar granule neurons. May mediate homophilic as well as heterophilic cell-cell interaction with AMIGO1 or AMIGO3. May contribute to signal transduction through its intracellular domain. This Rattus norvegicus (Rat) protein is Amphoterin-induced protein 2.